A 207-amino-acid chain; its full sequence is Oligoribonuclease (207 aa).

Residues Leu-20–Leu-183 enclose the Exonuclease domain. The active site involves Tyr-141.

It belongs to the oligoribonuclease family.

The protein localises to the cytoplasm. Its function is as follows. 3'-to-5' exoribonuclease specific for small oligoribonucleotides. This is Oligoribonuclease from Paraburkholderia xenovorans (strain LB400).